A 232-amino-acid chain; its full sequence is Ribose-5-phosphate isomerase A (232 aa).

Substrate is bound by residues 28 to 31 (TGST), 83 to 86 (DGAD), and 96 to 99 (KGGG). Catalysis depends on E105, which acts as the Proton acceptor. Substrate is bound at residue K123.

This sequence belongs to the ribose 5-phosphate isomerase family. In terms of assembly, homodimer.

It catalyses the reaction aldehydo-D-ribose 5-phosphate = D-ribulose 5-phosphate. It participates in carbohydrate degradation; pentose phosphate pathway; D-ribose 5-phosphate from D-ribulose 5-phosphate (non-oxidative stage): step 1/1. Functionally, catalyzes the reversible conversion of ribose-5-phosphate to ribulose 5-phosphate. The chain is Ribose-5-phosphate isomerase A from Rhodopseudomonas palustris (strain ATCC BAA-98 / CGA009).